The chain runs to 410 residues: Protein translocase subunit SecY (410 aa).

A run of 9 helical transmembrane segments spans residues L61–L81, I106–L126, L135–L155, V170–V190, F195–V215, Q248–I268, I289–L309, L349–F369, and V373–I393.

It belongs to the SecY/SEC61-alpha family. In terms of assembly, component of the plastid Sec protein translocase complex, which is composed of at least SecY and SecE.

The protein localises to the plastid. The protein resides in the chloroplast thylakoid membrane. The central subunit of the protein translocation channel SecYE. Consists of two halves formed by TMs 1-5 and 6-10. These two domains form a lateral gate at the front which open onto the bilayer between TMs 2 and 7, and are clamped together by SecE at the back. The channel is closed by both a pore ring composed of hydrophobic SecY resides and a short helix (helix 2A) on the extracellular side of the membrane which forms a plug. The chain is Protein translocase subunit SecY from Cyanidium caldarium (Red alga).